Here is a 256-residue protein sequence, read N- to C-terminus: Phosphomannomutase (256 aa).

Asp-12 acts as the Nucleophile in catalysis. Residues Asp-12 and Asp-14 each coordinate Mg(2+). The active-site Proton donor/acceptor is Asp-14. The alpha-D-mannose 1-phosphate site is built by Arg-21, Arg-123, Arg-134, Arg-141, Ser-179, and Asp-181. Residue Asp-209 participates in Mg(2+) binding.

The protein belongs to the eukaryotic PMM family. Homodimer.

Its subcellular location is the cytoplasm. It carries out the reaction alpha-D-mannose 1-phosphate = D-mannose 6-phosphate. It functions in the pathway nucleotide-sugar biosynthesis; GDP-alpha-D-mannose biosynthesis; alpha-D-mannose 1-phosphate from D-fructose 6-phosphate: step 2/2. Its function is as follows. Involved in the synthesis of the GDP-mannose and dolichol-phosphate-mannose required for a number of critical mannosyl transfer reactions. The chain is Phosphomannomutase (SEC53) from Encephalitozoon cuniculi (strain GB-M1) (Microsporidian parasite).